The primary structure comprises 164 residues: Transcriptional repressor NrdR (164 aa).

A zinc finger lies at 3 to 34 (CPKCNYNKSSVVDSRQAEDGNTIRRRRECEKC). The region spanning 49 to 139 (LLVVKKDGTR…VYKSFKDVDE (91 aa)) is the ATP-cone domain.

The protein belongs to the NrdR family. Requires Zn(2+) as cofactor.

Negatively regulates transcription of bacterial ribonucleotide reductase nrd genes and operons by binding to NrdR-boxes. The polypeptide is Transcriptional repressor NrdR (Streptococcus uberis (strain ATCC BAA-854 / 0140J)).